The following is a 545-amino-acid chain: Glucose-6-phosphate isomerase (545 aa).

Glu-351 functions as the Proton donor in the catalytic mechanism. Residues His-382 and Lys-510 contribute to the active site.

Belongs to the GPI family.

Its subcellular location is the cytoplasm. It carries out the reaction alpha-D-glucose 6-phosphate = beta-D-fructose 6-phosphate. The protein operates within carbohydrate biosynthesis; gluconeogenesis. It functions in the pathway carbohydrate degradation; glycolysis; D-glyceraldehyde 3-phosphate and glycerone phosphate from D-glucose: step 2/4. In terms of biological role, catalyzes the reversible isomerization of glucose-6-phosphate to fructose-6-phosphate. The protein is Glucose-6-phosphate isomerase of Shewanella sediminis (strain HAW-EB3).